A 545-amino-acid polypeptide reads, in one-letter code: T-complex protein 1 subunit gamma (545 aa).

N-acetylmethionine is present on Met1. The segment at 1 to 24 is disordered; the sequence is MMGHRPVLVLSQNTKRESGRKVQS. Ser11 carries the post-translational modification Phosphoserine. Lys15 participates in a covalent cross-link: Glycyl lysine isopeptide (Lys-Gly) (interchain with G-Cter in SUMO2). Position 42 (Gly42) interacts with ADP. Gly42 contributes to the ATP binding site. Mg(2+) is bound at residue Asp93. Residues Gly94, Thr95, Thr96, Ser97, Thr162, and Lys163 each contribute to the ADP site. Residues Gly94, Thr95, and Thr96 each coordinate ATP. Ser170 carries the post-translational modification Phosphoserine. An N6-acetyllysine modification is found at Lys222. Phosphoserine occurs at positions 243 and 244. At Tyr247 the chain carries Phosphotyrosine. Residues Lys248 and Lys249 each participate in a glycyl lysine isopeptide (Lys-Gly) (interchain with G-Cter in SUMO2) cross-link. Ser252 carries the phosphoserine modification. Cys366 and Cys372 are disulfide-bonded. A Glycyl lysine isopeptide (Lys-Gly) (interchain with G-Cter in SUMO2) cross-link involves residue Lys381. Gly411 provides a ligand contact to ADP. ATP is bound at residue Gly411. Thr430 and Thr459 each carry phosphothreonine. ADP is bound by residues Gly482, Glu483, Glu497, and Lys502. ATP is bound at residue Gly482. Position 497 (Glu497) interacts with ATP. Residues 526–545 are disordered; the sequence is HKKKGDDQSRQGGAPDAGQE.

It belongs to the TCP-1 chaperonin family. As to quaternary structure, component of the chaperonin-containing T-complex (TRiC), a hexadecamer composed of two identical back-to-back stacked rings enclosing a protein folding chamber. Each ring is made up of eight different subunits: TCP1/CCT1, CCT2, CCT3, CCT4, CCT5, CCT6A/CCT6, CCT7, CCT8. Interacts with PACRG. Interacts with DNAAF4. Interacts with DLEC1.

The protein localises to the cytoplasm. It catalyses the reaction ATP + H2O = ADP + phosphate + H(+). Functionally, component of the chaperonin-containing T-complex (TRiC), a molecular chaperone complex that assists the folding of actin, tubulin and other proteins upon ATP hydrolysis. The TRiC complex mediates the folding of WRAP53/TCAB1, thereby regulating telomere maintenance. As part of the TRiC complex may play a role in the assembly of BBSome, a complex involved in ciliogenesis regulating transports vesicles to the cilia. This chain is T-complex protein 1 subunit gamma (CCT3), found in Bos taurus (Bovine).